The following is a 28-amino-acid chain: Potassium channel toxin alpha-KTx 9.10 (28 aa).

Disulfide bonds link Cys-3/Cys-19, Cys-6/Cys-24, and Cys-10/Cys-26.

Belongs to the short scorpion toxin superfamily. Potassium channel inhibitor family. Alpha-KTx 09 subfamily. As to expression, expressed by the venom gland.

The protein localises to the secreted. Its function is as follows. Blocks Shaker potassium channels. This chain is Potassium channel toxin alpha-KTx 9.10, found in Mesobuthus eupeus (Lesser Asian scorpion).